A 34-amino-acid polypeptide reads, in one-letter code: Leader peptide SpeFL (34 aa).

The short motif at 10–16 (HIRRTTH) is the Ornithine recognition loop element. An L-ornithine-binding site is contributed by Arg-13.

It belongs to the speF operon leader peptide family. Binds ornithine in stalled 70S ribosomes, blocking the upper two-thirds of the exit tunnel. Contacts 23S rRNA and ribosomal proteins L4 and L22.

Functionally, a small protein (arrest peptide) encoded upstream of inducible ornithine carboxylase gene (speF) that controls expression of downstream genes (speF and potE) by transcriptional and translational attenuation. Its expression controls transcription and translation of downstream SpeF; translation pausing at low Arg levels on this mRNA prevents premature Rho-dependent transcription termination of speF and also enhances SprF translation by preventing sequestration of its ribosome-binding site. In the presence of high Arg levels translation of this protein allows the formation of an speF mRNA structure that is degraded by RNase G. This Salmonella typhimurium (strain SL1344) protein is Leader peptide SpeFL.